The following is a 344-amino-acid chain: Hypoxia-inducible factor 1-alpha inhibitor (344 aa).

Position 2 is an N-acetylalanine (Ala2). One can recognise a JmjC domain in the interval 133 to 303 (GRVYLQQTLN…PKRIEYPLKA (171 aa)). 2-oxoglutarate is bound at residue Tyr136. Residues Asp143 and 173 to 174 (LT) each bind substrate. 2-oxoglutarate is bound at residue Thr187. Residues His190 and Asp192 each contribute to the Fe cation site. 192–194 (DEQ) lines the substrate pocket. 2-oxoglutarate contacts are provided by Asn196 and Lys205. Position 229-230 (229-230 (RQ)) interacts with substrate. His270 is a Fe cation binding site. A 2-oxoglutarate-binding site is contributed by Asn285. Substrate-binding residues include Ala291 and Asn312.

Homodimer; homodimerization is essential for catalytic activity. The cofactor is Fe(2+).

Its subcellular location is the nucleus. The protein resides in the cytoplasm. It localises to the perinuclear region. It catalyses the reaction L-asparaginyl-[hypoxia-inducible factor alpha subunit] + 2-oxoglutarate + O2 = (3S)-3-hydroxy-L-asparaginyl-[hypoxia-inducible factor alpha subunit] + succinate + CO2. It carries out the reaction L-histidyl-[ankyrin-repeat domain protein] + 2-oxoglutarate + O2 = (3S)-3-hydroxy-L-histidyl-[ankyrin-repeat domain protein] + succinate + CO2. The enzyme catalyses L-asparaginyl-[ankyrin-repeat domain protein] + 2-oxoglutarate + O2 = (3S)-3-hydroxy-L-asparaginyl-[ankyrin-repeat domain protein] + succinate + CO2. The catalysed reaction is L-aspartyl-[ankyrin-repeat domain protein] + 2-oxoglutarate + O2 = (3S)-3-hydroxy-L-aspartyl-[ankyrin-repeat domain protein] + succinate + CO2. Functionally, hydroxylates a specific Asn residue in the C-terminal transactivation domain (CAD) of HIF-1 alpha. The hydroxylation prevents interaction of HIF-1 with transcriptional coactivators. Also hydroxylates specific Asn, Asp and His residues within ankyrin repeat domain-containing proteins. The protein is Hypoxia-inducible factor 1-alpha inhibitor (hif1an) of Danio rerio (Zebrafish).